The following is a 416-amino-acid chain: Probable 26S proteasome regulatory subunit rpn-6.2 (416 aa).

Positions 217–386 (YKTSFSYFYE…DTVVVYPKAD (170 aa)) constitute a PCI domain.

It belongs to the proteasome subunit S9 family. Component of the lid subcomplex of the 19S proteasome regulatory particle complex (also named PA700 complex). The 26S proteasome consists of a 20S proteasome core and two 19S regulatory subunits.

In terms of biological role, component of the lid subcomplex of the 26S proteasome, a multiprotein complex involved in the ATP-dependent degradation of ubiquitinated proteins. In the complex, rpn-6.2 is required for proteasome assembly. The polypeptide is Probable 26S proteasome regulatory subunit rpn-6.2 (rpn-6.2) (Caenorhabditis elegans).